The chain runs to 107 residues: Phosphoribosyl-ATP pyrophosphatase (107 aa).

It belongs to the PRA-PH family.

It is found in the cytoplasm. It catalyses the reaction 1-(5-phospho-beta-D-ribosyl)-ATP + H2O = 1-(5-phospho-beta-D-ribosyl)-5'-AMP + diphosphate + H(+). The protein operates within amino-acid biosynthesis; L-histidine biosynthesis; L-histidine from 5-phospho-alpha-D-ribose 1-diphosphate: step 2/9. The sequence is that of Phosphoribosyl-ATP pyrophosphatase from Bacillus cereus (strain Q1).